The chain runs to 138 residues: MRTVSARSSVALVVIVAAVLVWTSSASVAPAPAPGSEETCGTVVGALMPCLPFVQGKEKEPSKGCCSGAKRLDGETKTGPQRVHACECIQTAMKTYSDIDGKLVSEVPKHCGIVDSKLPPIDVNMDCKTLGVLHYKGN.

The N-terminal stretch at 1–36 (MRTVSARSSVALVVIVAAVLVWTSSASVAPAPAPGS) is a signal peptide. 4 cysteine pairs are disulfide-bonded: cysteine 40/cysteine 88, cysteine 50/cysteine 65, cysteine 66/cysteine 111, and cysteine 86/cysteine 127.

The protein belongs to the plant LTP family.

In terms of biological role, plant non-specific lipid-transfer proteins transfer phospholipids as well as galactolipids across membranes. May play a role in wax or cutin deposition in the cell walls of expanding epidermal cells and certain secretory tissues. The polypeptide is Probable non-specific lipid-transfer protein 1 (Parietaria judaica (Pellitory-of-the-wall)).